Here is a 713-residue protein sequence, read N- to C-terminus: Polyribonucleotide nucleotidyltransferase (713 aa).

The Mg(2+) site is built by aspartate 498 and aspartate 504. The KH domain maps to 565 to 631 (PRILSLKVPV…RIEDLTREAK (67 aa)). The S1 motif domain maps to 633–701 (GEIYEGTVTR…ERGKIDLIRP (69 aa)).

Belongs to the polyribonucleotide nucleotidyltransferase family. The cofactor is Mg(2+).

The protein resides in the cytoplasm. The catalysed reaction is RNA(n+1) + phosphate = RNA(n) + a ribonucleoside 5'-diphosphate. Its function is as follows. Involved in mRNA degradation. Catalyzes the phosphorolysis of single-stranded polyribonucleotides processively in the 3'- to 5'-direction. The sequence is that of Polyribonucleotide nucleotidyltransferase from Thermus thermophilus.